A 246-amino-acid chain; its full sequence is tRNA (guanine-N(7)-)-methyltransferase (246 aa).

S-adenosyl-L-methionine is bound by residues E76, E101, D128, and D151. D151 is a catalytic residue. K155 provides a ligand contact to substrate. An interaction with RNA region spans residues 157–162; that stretch reads RHNKRR. Residues D187 and 222–225 contribute to the substrate site; that span reads TKFE.

It belongs to the class I-like SAM-binding methyltransferase superfamily. TrmB family.

The enzyme catalyses guanosine(46) in tRNA + S-adenosyl-L-methionine = N(7)-methylguanosine(46) in tRNA + S-adenosyl-L-homocysteine. Its pathway is tRNA modification; N(7)-methylguanine-tRNA biosynthesis. In terms of biological role, catalyzes the formation of N(7)-methylguanine at position 46 (m7G46) in tRNA. The sequence is that of tRNA (guanine-N(7)-)-methyltransferase from Dechloromonas aromatica (strain RCB).